A 527-amino-acid polypeptide reads, in one-letter code: Putative WEB family protein At4g17210 (527 aa).

2 disordered regions span residues methionine 1–arginine 28 and phenylalanine 46–serine 70. Residues serine 55–aspartate 68 show a composition bias toward low complexity. 3 coiled-coil regions span residues alanine 95–isoleucine 159, serine 202–methionine 389, and lysine 436–serine 513.

Belongs to the WEB family.

The polypeptide is Putative WEB family protein At4g17210 (Arabidopsis thaliana (Mouse-ear cress)).